A 73-amino-acid chain; its full sequence is MSKLGVLLTICLLLLPLTALPMDEDQPADQPADRMQDDISSEQYPLFDKRQKCCGKGMTCPRYFRDNFICGCC.

The first 19 residues, 1-19 (MSKLGVLLTICLLLLPLTA), serve as a signal peptide directing secretion. Residues 20–48 (LPMDEDQPADQPADRMQDDISSEQYPLFD) constitute a propeptide that is removed on maturation. At glutamine 51 the chain carries Pyrrolidone carboxylic acid. 3 cysteine pairs are disulfide-bonded: cysteine 53-cysteine 72, cysteine 54-cysteine 70, and cysteine 60-cysteine 73.

Belongs to the conotoxin M superfamily. In terms of tissue distribution, expressed by the venom duct.

The protein localises to the secreted. In terms of biological role, shows a paralytic effect in fish. The protein is Conotoxin CnIIIG of Conus consors (Singed cone).